The chain runs to 160 residues: UPF0758 protein YfjY (160 aa).

Residues 38–160 (AFTSTQAARD…IYSFAEHGLL (123 aa)) form the MPN domain. Positions 109, 111, and 122 each coordinate Zn(2+). A JAMM motif motif is present at residues 109–122 (HNHPSGDTTPSQAD).

This sequence belongs to the UPF0758 family.

This chain is UPF0758 protein YfjY (yfjY), found in Escherichia coli (strain K12).